Consider the following 380-residue polypeptide: 3-isopropylmalate dehydratase large subunit (380 aa).

C262, C320, and C323 together coordinate [4Fe-4S] cluster.

This sequence belongs to the aconitase/IPM isomerase family. LeuC type 2 subfamily. As to quaternary structure, heterodimer of LeuC and LeuD. The cofactor is [4Fe-4S] cluster.

The catalysed reaction is (2R,3S)-3-isopropylmalate = (2S)-2-isopropylmalate. It participates in amino-acid biosynthesis; L-leucine biosynthesis; L-leucine from 3-methyl-2-oxobutanoate: step 2/4. In terms of biological role, catalyzes the isomerization between 2-isopropylmalate and 3-isopropylmalate, via the formation of 2-isopropylmaleate. This chain is 3-isopropylmalate dehydratase large subunit, found in Thermococcus kodakarensis (strain ATCC BAA-918 / JCM 12380 / KOD1) (Pyrococcus kodakaraensis (strain KOD1)).